Here is a 265-residue protein sequence, read N- to C-terminus: Chorismate mutase 2 (265 aa).

Residues 10-265 form the Chorismate mutase domain; the sequence is GSGCSNVLSL…EVEYLLRRLD (256 aa).

In terms of assembly, homodimer. In terms of tissue distribution, expressed in roots, stems, cauline leaves and flowers, and at lower levels in rosette leaves and siliques.

The protein localises to the cytoplasm. It localises to the cytosol. The enzyme catalyses chorismate = prephenate. The protein operates within metabolic intermediate biosynthesis; prephenate biosynthesis; prephenate from chorismate: step 1/1. No allosteric regulation. The polypeptide is Chorismate mutase 2 (Arabidopsis thaliana (Mouse-ear cress)).